A 717-amino-acid chain; its full sequence is Epithelial splicing regulatory protein 2 (717 aa).

Positions 1–14 (MTPPPPPPPPPGPD) are enriched in pro residues. The disordered stretch occupies residues 1 to 23 (MTPPPPPPPPPGPDPAVDSATDP). S83 is modified (phosphoserine). RRM domains are found at residues 247 to 343 (TVVR…RFLS), 348 to 428 (VILR…RSTA), and 465 to 545 (DCVR…PCST). Residue S563 is modified to Phosphoserine.

It belongs to the ESRP family. Interacts with RBPMS. Epithelial cell-specific.

The protein resides in the nucleus. Functionally, mRNA splicing factor that regulates the formation of epithelial cell-specific isoforms. Specifically regulates the expression of FGFR2-IIIb, an epithelial cell-specific isoform of FGFR2. Also regulates the splicing of CD44, CTNND1, ENAH, 3 transcripts that undergo changes in splicing during the epithelial-to-mesenchymal transition (EMT). Acts by directly binding specific sequences in mRNAs. Binds the GU-rich sequence motifs in the ISE/ISS-3, a cis-element regulatory region present in the mRNA of FGFR2. The protein is Epithelial splicing regulatory protein 2 (Esrp2) of Mus musculus (Mouse).